The sequence spans 280 residues: Probable aquaporin PIP2-8 (280 aa).

The disordered stretch occupies residues 1 to 21; that stretch reads MAAGSGSGSNPKDYQDPPPAP. A run of 2 helical transmembrane segments spans residues 36–56 and 70–92; these read AAIAEFTATLLLVCISVSTVI and LGIAWAFGGLIFVLVYCTAGISG. The NPA 1 signature appears at 96–98; that stretch reads NPA. The next 3 membrane-spanning stretches (helical) occupy residues 113 to 135, 156 to 176, and 192 to 212; these read RAALYTMAQCVGAVCGAGLARAM, SAGAGVVAEMVGTFVLVYTVF, and VLAPLPIGLAVLVVHLATIPI. The NPA 2 signature appears at 218-220; sequence NPA. The chain crosses the membrane as a helical span at residues 236 to 256; it reads AWSHLWIFWVGPFAGAAAAMI.

Belongs to the MIP/aquaporin (TC 1.A.8) family. PIP (TC 1.A.8.11) subfamily. In terms of tissue distribution, expressed in leaves and at lower levels in roots.

The protein localises to the cell membrane. Its function is as follows. Aquaporins facilitate the transport of water and small neutral solutes across cell membranes. In Oryza sativa subsp. japonica (Rice), this protein is Probable aquaporin PIP2-8 (PIP2-8).